A 644-amino-acid chain; its full sequence is Neurofilament medium polypeptide (644 aa).

Positions 1-33 are coil 1B; sequence VKVELDKKVQSLQDEVAFLRTNHEEEVADLLAQ. Positions 1–197 constitute an IF rod domain; sequence VKVELDKKVQ…KLLEGEETRF (197 aa). A Phosphoserine modification is found at Ser-11. The interval 34–50 is linker 12; it reads IQASHITVERKDYLKTD. The segment at 51–72 is coil 2A; the sequence is ISSALKEIRSQLECHSDQNMHQ. Positions 73 to 76 are linker 2; the sequence is AEEW. Residues 77–197 are coil 2B; it reads FKCRYAKLTE…KLLEGEETRF (121 aa). Tyr-105 carries the post-translational modification Phosphotyrosine. Phosphoserine occurs at positions 131, 203, and 215. The tail stretch occupies residues 198–643; the sequence is STFSGSITGP…HAIVKEVTQS (446 aa). Residue Thr-217 is glycosylated (O-linked (GlcNAc) threonine). Phosphoserine is present on residues Ser-253 and Ser-269. The disordered stretch occupies residues 270-582; that stretch reads VKEEEKEEEA…GGDRSEEKVV (313 aa). Residues 274–292 are compositionally biased toward acidic residues; sequence EKEEEAEGKEEEQEAEEEV. The residue at position 298 (Ser-298) is a Phosphoserine. A compositionally biased stretch (acidic residues) spans 308–328; the sequence is KEEEGEKEEEGQEEEEEEEDE. A compositionally biased stretch (basic and acidic residues) spans 329–350; it reads GVKSDQAEEGGSEKEGSSKNEG. Phosphoserine occurs at positions 332, 340, 345, and 346. A compositionally biased stretch (acidic residues) spans 351 to 368; it reads EQEEGETEAEGEVEEAEA. Thr-357 bears the Phosphothreonine mark. Positions 369 to 400 are enriched in basic and acidic residues; the sequence is KEEKKTEEKSEEVAAKEEPVTEAKVGKPEKAK. Phosphoserine occurs at positions 401, 406, 442, and 465. The segment covering 422–470 has biased composition (basic and acidic residues); that stretch reads GEQKEEEEKVEEEKKKAAKESPKEEKVEKKEEKPKDVPKKKAESPVKEE. Residues 474–483 are compositionally biased toward low complexity; it reads EAATITKPTK. Positions 485-508 are enriched in basic and acidic residues; the sequence is GLEKETKEGEKPLQQEKEKEKAGE. Phosphoserine is present on residues Ser-512, Ser-550, and Ser-566. Over residues 545-557 the composition is skewed to basic and acidic residues; that stretch reads TKEKGSGREEEKG. The span at 568 to 582 shows a compositional bias: basic and acidic residues; the sequence is ADEKKGGDRSEEKVV.

The protein belongs to the intermediate filament family. In terms of assembly, forms heterodimers with NEFL; which can further hetero-oligomerize (in vitro). Forms heterodimers with INA (in vitro). Post-translationally, there are a number of repeats of the tripeptide K-S-P, NFM is phosphorylated on a number of the serines in this motif. It is thought that phosphorylation of NFM results in the formation of interfilament cross bridges that are important in the maintenance of axonal caliber. Phosphorylation seems to play a major role in the functioning of the larger neurofilament polypeptides (NF-M and NF-H), the levels of phosphorylation being altered developmentally and coincidentally with a change in the neurofilament function. In terms of processing, phosphorylated in the head and rod regions by the PKC kinase PKN1, leading to the inhibition of polymerization.

The protein localises to the cytoplasm. It is found in the cytoskeleton. The protein resides in the cell projection. It localises to the axon. Functionally, neurofilaments usually contain three intermediate filament proteins: NEFL, NEFM, and NEFH which are involved in the maintenance of neuronal caliber. May additionally cooperate with the neuronal intermediate filament proteins PRPH and INA to form neuronal filamentous networks. The sequence is that of Neurofilament medium polypeptide (NEFM) from Oryctolagus cuniculus (Rabbit).